Consider the following 188-residue polypeptide: Guanylate kinase (188 aa).

The Guanylate kinase-like domain occupies 8 to 188 (GRIVVLAGPS…AVAAISEILR (181 aa)). 15–22 (GPSAVGKS) is an ATP binding site.

Belongs to the guanylate kinase family.

It is found in the cytoplasm. It catalyses the reaction GMP + ATP = GDP + ADP. Functionally, essential for recycling GMP and indirectly, cGMP. The protein is Guanylate kinase of Corynebacterium jeikeium (strain K411).